Reading from the N-terminus, the 281-residue chain is Bifunctional protein FolD (281 aa).

NADP(+) contacts are provided by residues 161–163 (GRS), serine 186, and isoleucine 227.

The protein belongs to the tetrahydrofolate dehydrogenase/cyclohydrolase family. Homodimer.

The enzyme catalyses (6R)-5,10-methylene-5,6,7,8-tetrahydrofolate + NADP(+) = (6R)-5,10-methenyltetrahydrofolate + NADPH. The catalysed reaction is (6R)-5,10-methenyltetrahydrofolate + H2O = (6R)-10-formyltetrahydrofolate + H(+). Its pathway is one-carbon metabolism; tetrahydrofolate interconversion. Functionally, catalyzes the oxidation of 5,10-methylenetetrahydrofolate to 5,10-methenyltetrahydrofolate and then the hydrolysis of 5,10-methenyltetrahydrofolate to 10-formyltetrahydrofolate. The chain is Bifunctional protein FolD from Brachyspira hyodysenteriae (strain ATCC 49526 / WA1).